The primary structure comprises 112 residues: Putative pterin-4-alpha-carbinolamine dehydratase (112 aa).

The protein belongs to the pterin-4-alpha-carbinolamine dehydratase family.

The enzyme catalyses (4aS,6R)-4a-hydroxy-L-erythro-5,6,7,8-tetrahydrobiopterin = (6R)-L-erythro-6,7-dihydrobiopterin + H2O. The polypeptide is Putative pterin-4-alpha-carbinolamine dehydratase (Shewanella amazonensis (strain ATCC BAA-1098 / SB2B)).